Here is a 399-residue protein sequence, read N- to C-terminus: Bone morphogenetic protein 8B (399 aa).

The first 19 residues, 1-19, serve as a signal peptide directing secretion; it reads MAARPGLLWLLGLALCVLG. A propeptide spanning residues 20 to 260 is cleaved from the precursor; sequence GGHLSHPPHV…ANQSPVRAPR (241 aa). N-linked (GlcNAc...) asparagine glycosylation is found at asparagine 155 and asparagine 340. Disulfide bonds link cysteine 298–cysteine 364, cysteine 327–cysteine 396, and cysteine 331–cysteine 398.

Belongs to the TGF-beta family. In terms of assembly, homodimer; disulfide-linked. As to expression, expressed in testis. Expressed in decidual cells of the uterus and in trophoblast cells of the labyrinthine region of the placenta and in the inner root sheath of hair follicles of early postnatal skin. Expressed in the extraembryonic ectoderm in pregastrula and gastrula stage mouse embryos. Expressed in brown adipose tissue and brain.

It localises to the secreted. In terms of biological role, induces cartilage and bone formation. May be the osteoinductive factor responsible for the phenomenon of epithelial osteogenesis. Plays a role in calcium regulation and bone homeostasis. Involved in the generation of primordial germ cells; this function involves Bmp4 in a synergistic manner though separate receptor complexes seem to be involved. Required for the initiation and maintenance of spermatogenesis. Signaling protein involved in regulation of thermogenesis and energy balance. Proposed to increase the peripheral response of brown adipose tissue (BAT) to adrenergic stimulation while acting centrally in the hypothalamus to increase sympathetic output to BAT. This Mus musculus (Mouse) protein is Bone morphogenetic protein 8B (Bmp8b).